Here is a 153-residue protein sequence, read N- to C-terminus: Large ribosomal subunit protein uL22 (153 aa).

This sequence belongs to the universal ribosomal protein uL22 family. In terms of assembly, part of the 50S ribosomal subunit.

Functionally, this protein binds specifically to 23S rRNA. It makes multiple contacts with different domains of the 23S rRNA in the assembled 50S subunit and ribosome. In terms of biological role, the globular domain of the protein is located near the polypeptide exit tunnel on the outside of the subunit, while an extended beta-hairpin is found that lines the wall of the exit tunnel in the center of the 70S ribosome. This Methanococcus maripaludis (strain C5 / ATCC BAA-1333) protein is Large ribosomal subunit protein uL22.